Reading from the N-terminus, the 409-residue chain is Glycogenin (409 aa).

Residues leucine 8, tyrosine 14, and arginine 80 each coordinate UDP. UDP-alpha-D-glucose is bound by residues leucine 8, tyrosine 14, arginine 80, lysine 89, aspartate 105, aspartate 107, asparagine 140, serine 141, aspartate 169, aspartate 172, and glutamine 173. Positions 105 and 107 each coordinate UDP. The Mn(2+) site is built by aspartate 105 and aspartate 107. Tyrosine 212 carries O-linked (Glc...) tyrosine glycosylation. Residues histidine 229, glycine 232, and lysine 235 each coordinate UDP. Histidine 229 contacts Mn(2+). 2 residues coordinate UDP-alpha-D-glucose: glycine 232 and lysine 235. The disordered stretch occupies residues 283–303; it reads RIEEDSHETEEKVDEEVSISE.

It belongs to the glycosyltransferase 8 family. Glycogenin subfamily. The cofactor is Mn(2+).

Its subcellular location is the cytoplasm. The protein resides in the vacuole. It carries out the reaction L-tyrosyl-[glycogenin] + UDP-alpha-D-glucose = alpha-D-glucosyl-L-tyrosyl-[glycogenin] + UDP + H(+). The enzyme catalyses [1,4-alpha-D-glucosyl](n)-L-tyrosyl-[glycogenin] + UDP-alpha-D-glucose = [1,4-alpha-D-glucosyl](n+1)-L-tyrosyl-[glycogenin] + UDP + H(+). Functionally, glycogenin participates in the glycogen biosynthetic process along with glycogen synthase and glycogen branching enzyme. It catalyzes the formation of a short alpha (1,4)-glucosyl chain covalently attached via a glucose 1-O-tyrosyl linkage to internal tyrosine residues and these chains act as primers for the elongation reaction catalyzed by glycogen synthase. This chain is Glycogenin, found in Komagataella phaffii (strain GS115 / ATCC 20864) (Yeast).